Here is a 122-residue protein sequence, read N- to C-terminus: Putative MOB kinase activator-like 2B (122 aa).

2 residues coordinate Zn(2+): H69 and H74.

Belongs to the MOB1/phocein family.

Its subcellular location is the nucleus. It localises to the cytoplasm. It is found in the cytoskeleton. The protein localises to the phragmoplast. In Arabidopsis thaliana (Mouse-ear cress), this protein is Putative MOB kinase activator-like 2B.